Consider the following 433-residue polypeptide: Adenylosuccinate synthetase (433 aa).

Residues 11-17 and 39-41 contribute to the GTP site; these read GDEGKGK and GHT. D12 functions as the Proton acceptor in the catalytic mechanism. D12 and G39 together coordinate Mg(2+). IMP contacts are provided by residues 12–15, 37–40, T134, R148, N230, T245, and R309; these read DEGK and NAGH. The active-site Proton donor is H40. 305 to 311 lines the substrate pocket; sequence VTTGRKR. GTP is bound by residues R311, 337-339, and 419-421; these read KLD and GTG.

It belongs to the adenylosuccinate synthetase family. Homodimer. Requires Mg(2+) as cofactor.

Its subcellular location is the cytoplasm. The enzyme catalyses IMP + L-aspartate + GTP = N(6)-(1,2-dicarboxyethyl)-AMP + GDP + phosphate + 2 H(+). It functions in the pathway purine metabolism; AMP biosynthesis via de novo pathway; AMP from IMP: step 1/2. Plays an important role in the de novo pathway and in the salvage pathway of purine nucleotide biosynthesis. Catalyzes the first committed step in the biosynthesis of AMP from IMP. This is Adenylosuccinate synthetase from Saccharomyces cerevisiae (strain YJM789) (Baker's yeast).